Consider the following 208-residue polypeptide: MKVTLVHLLFMMLLLLLGLGLGLGLGLHMAAAVLEDQPLNEFWPSDSQNTEEGEGIWTTEGLALGYKEMAQPVWPEEAVLSEDEVGGSRMLRAEPRFQSKQDYLKFDLSVRDCNTMMAHKIKEPNQSCINQYTFIHEDPNTVKAVCNGSLVDCDLQGGKCYKSPRPFDLTLCKLAKPGQVTPNCHYLTYITEKSIFMTCNDKRQLETK.

A signal peptide spans 1-24; it reads MKVTLVHLLFMMLLLLLGLGLGLG. N-linked (GlcNAc...) asparagine glycosylation is found at Asn125 and Asn147.

The protein belongs to the pancreatic ribonuclease family. In terms of processing, the N-terminus is blocked. Glycosylated. As to expression, male-specific expression in proximal caput of the epididymis (at protein level).

It is found in the secreted. Functionally, secreted proximal epididymal protein required for post-testicular sperm maturation and male fertility. May be involved in sperm adhesion to the egg zona pellucida. Does not have ribonuclease activity. In Mus musculus (Mouse), this protein is Inactive ribonuclease-like protein 10 (Rnase10).